We begin with the raw amino-acid sequence, 321 residues long: Transaldolase (321 aa).

The active-site Schiff-base intermediate with substrate is Lys-132.

Belongs to the transaldolase family. Type 1 subfamily. As to quaternary structure, homodimer.

It is found in the cytoplasm. The catalysed reaction is D-sedoheptulose 7-phosphate + D-glyceraldehyde 3-phosphate = D-erythrose 4-phosphate + beta-D-fructose 6-phosphate. It functions in the pathway carbohydrate degradation; pentose phosphate pathway; D-glyceraldehyde 3-phosphate and beta-D-fructose 6-phosphate from D-ribose 5-phosphate and D-xylulose 5-phosphate (non-oxidative stage): step 2/3. Transaldolase is important for the balance of metabolites in the pentose-phosphate pathway. The chain is Transaldolase from Agrobacterium fabrum (strain C58 / ATCC 33970) (Agrobacterium tumefaciens (strain C58)).